The primary structure comprises 178 residues: Large ribosomal subunit protein uL6 (178 aa).

It belongs to the universal ribosomal protein uL6 family. In terms of assembly, part of the 50S ribosomal subunit.

This protein binds to the 23S rRNA, and is important in its secondary structure. It is located near the subunit interface in the base of the L7/L12 stalk, and near the tRNA binding site of the peptidyltransferase center. The chain is Large ribosomal subunit protein uL6 from Campylobacter jejuni subsp. doylei (strain ATCC BAA-1458 / RM4099 / 269.97).